The primary structure comprises 90 residues: Co-chaperonin GroES (90 aa).

The protein belongs to the GroES chaperonin family. In terms of assembly, heptamer of 7 subunits arranged in a ring. Interacts with the chaperonin GroEL.

It localises to the cytoplasm. Functionally, together with the chaperonin GroEL, plays an essential role in assisting protein folding. The GroEL-GroES system forms a nano-cage that allows encapsulation of the non-native substrate proteins and provides a physical environment optimized to promote and accelerate protein folding. GroES binds to the apical surface of the GroEL ring, thereby capping the opening of the GroEL channel. The polypeptide is Co-chaperonin GroES (Borreliella burgdorferi (strain ATCC 35210 / DSM 4680 / CIP 102532 / B31) (Borrelia burgdorferi)).